A 444-amino-acid chain; its full sequence is Cortexillin-1 (444 aa).

The interval 1–227 is actin-binding; the sequence is MAGKDWEIVQ…VLYTSLFFHA (227 aa). 2 consecutive Calponin-homology (CH) domains span residues 8–115 and 124–229; these read IVQE…RKYR and KSSE…HAYR. 2 coiled-coil regions span residues 227–352 and 410–434; these read AYRA…TRIR and LATKLEAENLAIMKLLNQKEDDLKA.

This sequence belongs to the cortexillin family. In terms of assembly, homodimer; parallel.

The protein localises to the cytoplasm. The protein resides in the cytoskeleton. Functionally, actin-bundling protein. When linked to F-actin the actin filaments form preferentially anti-parallel bundles that associate into meshworks. Plays a major role in cytokinesis. Negatively regulates cortical localization of rapgap1. This Dictyostelium discoideum (Social amoeba) protein is Cortexillin-1 (ctxA).